The sequence spans 525 residues: G patch domain-containing protein 3 (525 aa).

Residues 264 to 316 (YLADIPASPCGEPEEEVGKEEEEESHSDEDDDRGEEWERHEALHEDVTGQERT) form a disordered region. Acidic residues predominate over residues 275 to 298 (EPEEEVGKEEEEESHSDEDDDRGE). A compositionally biased stretch (basic and acidic residues) spans 299–316 (EWERHEALHEDVTGQERT). Residues 410 to 458 (TKGIGRKVMERQGWAEGQGLGCRCSGVPEALDSDGQHPRCKRGLGYHGE) enclose the G-patch domain.

As to quaternary structure, interacts with mitochondrial MAVS; the interaction is markedly increased upon viral infection. In terms of tissue distribution, expressed in ocular tissues including retinal pigment epithelium, cornea, ciliary muscle and non-pigmented ciliary epithelium. Also expressed in optic nerve, cartilage, skin and lymph node.

The protein resides in the nucleus. The protein localises to the cytoplasm. Functionally, involved in transcriptional regulation. It is able to activate transcription from the CXCR4 promoter and therefore it might control neural crest cell migration involved in ocular and craniofacial development. Is a negative regulator of immune antiviral response, acting via down-regulation of RIG-I-like receptors signaling and inhibition of type I interferon production. The control mechanism involves interaction with mitochondrial MAVS and inhibition of MAVS assembly with downstream proteins implicated in antiviral response, such as TBK1 and TRAF6. The chain is G patch domain-containing protein 3 (GPATCH3) from Homo sapiens (Human).